Here is a 118-residue protein sequence, read N- to C-terminus: MKLPQTMLRSISVKHVRWPRILTGSKLWYSTQMAMTPEEKMITDKLQQELEPEVCKVQDVSGGCGSMFAINITSKKFNGLSLIKQHQLVNRILRDDISRWHGLQLTTKKSTGKGPASS.

The protein belongs to the BolA/IbaG family. As to quaternary structure, interacts with NFU1.

The protein resides in the mitochondrion matrix. Acts as a mitochondrial iron-sulfur (Fe-S) cluster assembly factor that facilitates [4Fe-4S] cluster insertion into a subset of mitochondrial proteins such as lipoyl synthase (LS) and succinate dehydrogenase (SDH). Required during the last step of iron-sulfur protein assembly when the iron-sulfur cluster is inserted into the target protein. Acts together with NFU1, later than BOL1 and GRX5 in the [4Fe-4S] cluster insertion process. Not required for [2Fe-2S] cluster insertion into mitochondrial proteins. This Saccharomyces cerevisiae (strain ATCC 204508 / S288c) (Baker's yeast) protein is BolA-like protein 3.